The primary structure comprises 419 residues: Probable 3-isopropylmalate dehydratase large subunit (419 aa).

Cys299, Cys359, and Cys362 together coordinate [4Fe-4S] cluster.

The protein belongs to the aconitase/IPM isomerase family. LeuC type 2 subfamily. As to quaternary structure, heterodimer of LeuC and LeuD. [4Fe-4S] cluster is required as a cofactor.

The enzyme catalyses (2R,3S)-3-isopropylmalate = (2S)-2-isopropylmalate. It participates in amino-acid biosynthesis; L-leucine biosynthesis; L-leucine from 3-methyl-2-oxobutanoate: step 2/4. Its function is as follows. Catalyzes the isomerization between 2-isopropylmalate and 3-isopropylmalate, via the formation of 2-isopropylmaleate. This Methanothermobacter thermautotrophicus (strain ATCC 29096 / DSM 1053 / JCM 10044 / NBRC 100330 / Delta H) (Methanobacterium thermoautotrophicum) protein is Probable 3-isopropylmalate dehydratase large subunit.